The chain runs to 292 residues: ATP synthase gamma chain (292 aa).

Belongs to the ATPase gamma chain family. In terms of assembly, F-type ATPases have 2 components, CF(1) - the catalytic core - and CF(0) - the membrane proton channel. CF(1) has five subunits: alpha(3), beta(3), gamma(1), delta(1), epsilon(1). CF(0) has three main subunits: a, b and c.

It localises to the cell inner membrane. In terms of biological role, produces ATP from ADP in the presence of a proton gradient across the membrane. The gamma chain is believed to be important in regulating ATPase activity and the flow of protons through the CF(0) complex. In Brucella ovis (strain ATCC 25840 / 63/290 / NCTC 10512), this protein is ATP synthase gamma chain.